Reading from the N-terminus, the 476-residue chain is RuvB-like helicase 2 (476 aa).

72 to 80 (VGPPSTGKT) is an ATP binding site.

Belongs to the RuvB family. As to quaternary structure, may form heterododecamers with RVB1. Component of the SWR1 chromatin remodeling complex, the INO80 chromatin remodeling complex, and of the R2TP complex.

It localises to the nucleus. It catalyses the reaction ATP + H2O = ADP + phosphate + H(+). Its function is as follows. DNA helicase which participates in several chromatin remodeling complexes, including the SWR1 and the INO80 complexes. The SWR1 complex mediates the ATP-dependent exchange of histone H2A for the H2A variant HZT1 leading to transcriptional regulation of selected genes by chromatin remodeling. The INO80 complex remodels chromatin by shifting nucleosomes and is involved in DNA repair. Also involved in pre-rRNA processing. The polypeptide is RuvB-like helicase 2 (RVB2) (Mycosarcoma maydis (Corn smut fungus)).